A 63-amino-acid polypeptide reads, in one-letter code: DNA gyrase inhibitor YacG (63 aa).

Cysteine 9, cysteine 12, cysteine 28, and cysteine 32 together coordinate Zn(2+).

It belongs to the DNA gyrase inhibitor YacG family. Interacts with GyrB. Requires Zn(2+) as cofactor.

Its function is as follows. Inhibits all the catalytic activities of DNA gyrase by preventing its interaction with DNA. Acts by binding directly to the C-terminal domain of GyrB, which probably disrupts DNA binding by the gyrase. In Salmonella choleraesuis (strain SC-B67), this protein is DNA gyrase inhibitor YacG.